The sequence spans 251 residues: tRNA pseudouridine synthase A (251 aa).

D53 acts as the Nucleophile in catalysis. A substrate-binding site is contributed by Y110.

It belongs to the tRNA pseudouridine synthase TruA family. Homodimer.

It catalyses the reaction uridine(38/39/40) in tRNA = pseudouridine(38/39/40) in tRNA. Formation of pseudouridine at positions 38, 39 and 40 in the anticodon stem and loop of transfer RNAs. This is tRNA pseudouridine synthase A from Mesoplasma florum (strain ATCC 33453 / NBRC 100688 / NCTC 11704 / L1) (Acholeplasma florum).